Here is a 119-residue protein sequence, read N- to C-terminus: Ribonuclease P protein component (119 aa).

It belongs to the RnpA family. As to quaternary structure, consists of a catalytic RNA component (M1 or rnpB) and a protein subunit.

It carries out the reaction Endonucleolytic cleavage of RNA, removing 5'-extranucleotides from tRNA precursor.. RNaseP catalyzes the removal of the 5'-leader sequence from pre-tRNA to produce the mature 5'-terminus. It can also cleave other RNA substrates such as 4.5S RNA. The protein component plays an auxiliary but essential role in vivo by binding to the 5'-leader sequence and broadening the substrate specificity of the ribozyme. This is Ribonuclease P protein component from Histophilus somni (strain 129Pt) (Haemophilus somnus).